The chain runs to 2570 residues: MAGPRGLLPLCLLAFCLAGFSFVRGQVLFKGCDVKTTFVTHVPCTSCAAIKKQTCPSGWLRELPDQITQDCRYEVQLGGSMVSMSGCRRKCRKQVVQKACCPGYWGSRCHECPGGAETPCNGHGTCLDGMDRNGTCVCQENFRGSACQECQDPNRFGPDCQSVCSCVHGVCNHGPRGDGSCLCFAGYTGPHCDQELPVCQELRCPQNTQCSAEAPSCRCLPGYTQQGSECRAPNPCWPSPCSLLAQCSVSPKGQAQCHCPENYHGDGMVCLPKDPCTDNLGGCPSNSTLCVYQKPGQAFCTCRPGLVSINSNASAGCFAFCSPFSCDRSATCQVTADGKTSCVCRESEVGDGRACYGHLLHEVQKATQTGRVFLQLRVAVAMMDQGCREILTTAGPFTVLVPSVSSFSSRTMNASLAQQLCRQHIIAGQHILEDTRTQQTRRWWTLAGQEITVTFNQFTKYSYKYKDQPQQTFNIYKANNIAANGVFHVVTGLRWQAPSGTPGDPKRTIGQILASTEAFSRFETILENCGLPSILDGPGPFTVFAPSNEAVDSLRDGRLIYLFTAGLSKLQELVRYHIYNHGQLTVEKLISKGRILTMANQVLAVNISEEGRILLGPEGVPLQRVDVMAANGVIHMLDGILLPPTILPILPKHCSEEQHKIVAGSCVDCQALNTSTCPPNSVKLDIFPKECVYIHDPTGLNVLKKGCASYCNQTIMEQGCCKGFFGPDCTQCPGGFSNPCYGKGNCSDGIQGNGACLCFPDYKGIACHICSNPNKHGEQCQEDCGCVHGLCDNRPGSGGVCQQGTCAPGFSGRFCNESMGDCGPTGLAQHCHLHARCVSQEGVARCRCLDGFEGDGFSCTPSNPCSHPDRGGCSENAECVPGSLGTHHCTCHKGWSGDGRVCVAIDECELDMRGGCHTDALCSYVGPGQSRCTCKLGFAGDGYQCSPIDPCRAGNGGCHGLATCRAVGGGQRVCTCPPGFGGDGFSCYGDIFRELEANAHFSIFYQWLKSAGITLPADRRVTALVPSEAAVRQLSPEDRAFWLQPRTLPNLVRAHFLQGALFEEELARLGGQEVATLNPTTRWEIRNISGRVWVQNASVDVADLLATNGVLHILSQVLLPPRGDVPGGQGLLQQLDLVPAFSLFRELLQHHGLVPQIEAATAYTIFVPTNRSLEAQGNSSHLDADTVRHHVVLGEALSMETLRKGGHRNSLLGPAHWIVFYNHSGQPEVNHVPLEGPMLEAPGRSLIGLSGVLTVGSSRCLHSHAEALREKCVNCTRRFRCTQGFQLQDTPRKSCVYRSGFSFSRGCSYTCAKKIQVPDCCPGFFGTLCEPCPGGLGGVCSGHGQCQDRFLGSGECHCHEGFHGTACEVCELGRYGPNCTGVCDCAHGLCQEGLQGDGSCVCNVGWQGLRCDQKITSPQCPRKCDPNANCVQDSAGASTCACAAGYSGNGIFCSEVDPCAHGHGGCSPHANCTKVAPGQRTCTCQDGYMGDGELCQEINSCLIHHGGCHIHAECIPTGPQQVSCSCREGYSGDGIRTCELLDPCSKNNGGCSPYATCKSTGDGQRTCTCDTAHTVGDGLTCRARVGLELLRDKHASFFSLRLLEYKELKGDGPFTIFVPHADLMSNLSQDELARIRAHRQLVFRYHVVGCRRLRSEDLLEQGYATALSGHPLRFSEREGSIYLNDFARVVSSDHEAVNGILHFIDRVLLPPEALHWEPDDAPIPRRNVTAAAQGFGYKIFSGLLKVAGLLPLLREASHRPFTMLWPTDAAFRALPPDRQAWLYHEDHRDKLAAILRGHMIRNVEALASDLPNLGPLRTMHGTPISFSCSRTRAGELMVGEDDARIVQRHLPFEGGLAYGIDQLLEPPGLGARCDHFETRPLRLNTCSICGLEPPCPEGSQEQGSPEACWRFYPKFWTSPPLHSLGLRSVWVHPSLWGRPQGLGRGCHRNCVTTTWKPSCCPGHYGSECQACPGGPSSPCSDRGVCMDGMSGSGQCLCRSGFAGTACELCAPGAFGPHCQACRCTVHGRCDEGLGGSGSCFCDEGWTGPRCEVQLELQPVCTPPCAPEAVCRAGNSCECSLGYEGDGRVCTVADLCQDGHGGCSEHANCSQVGTMVTCTCLPDYEGDGWSCRARNPCTDGHRGGCSEHANCLSTGLNTRRCECHAGYVGDGLQCLEESEPPVDRCLGQPPPCHSDAMCTDLHFQEKRAGVFHLQATSGPYGLNFSEAEAACEAQGAVLASFPQLSAAQQLGFHLCLMGWLANGSTAHPVVFPVADCGNGRVGIVSLGARKNLSERWDAYCFRVQDVACRCRNGFVGDGISTCNGKLLDVLAATANFSTFYGMLLGYANATQRGLDFLDFLDDELTYKTLFVPVNEGFVDNMTLSGPDLELHASNATLLSANASQGKLLPAHSGLSLIISDAGPDNSSWAPVAPGTVVVSRIIVWDIMAFNGIIHALASPLLAPPQPQAVLAPEAPPVAAGVGAVLAAGALLGLVAGALYLRARGKPMGFGFSAFQAEDDADDDFSPWQEGTNPTLVSVPNPVFGSDTFCEPFDDSLLEEDFPDTQRILTVK.

Positions M1–G25 are cleaved as a signal peptide. Over Q26–A2478 the chain is Extracellular. EGF-like domains are found at residues H110–Q148, F156–D193, E195–E229, and A232–L271. Disulfide bonds link C112-C126, C120-C136, C138-C147, C160-C171, C164-C181, C183-C192, C199-C210, C204-C217, C236-C247, C241-C257, and C259-C270. A glycan (N-linked (GlcNAc...) asparagine) is linked at N133. Residues N286, N312, N413, N606, N673, N712, and N745 are each glycosylated (N-linked (GlcNAc...) asparagine). 2 FAS1 domains span residues Y356–R494 and K506–L641. In terms of domain architecture, EGF-like 5 spans D728–H768. Intrachain disulfides connect C732–C746, C740–C756, and C758–C767. A glycan (N-linked (GlcNAc...) asparagine) is linked at N816. 4 consecutive EGF-like domains span residues S818 to S858, P861 to V903, A904 to S946, and P947 to S986. 10 cysteine pairs are disulfide-bonded: C822-C837, C831-C846, C865-C879, C873-C889, C891-C902, C908-C922, C916-C932, C934-C945, C951-C964, and C958-C974. 2 consecutive FAS1 domains span residues Y988–L1118 and G1128–L1253. N-linked (GlcNAc...) asparagine glycans are attached at residues N1087, N1096, N1170, N1178, N1222, and N1274. Residues T1327 to E1392 enclose the Laminin EGF-like 1 domain. 3 disulfides stabilise this stretch: C1332–C1346, C1340–C1356, and C1358–C1367. N1378 carries an N-linked (GlcNAc...) asparagine glycan. Cystine bridges form between C1379/C1390, C1383/C1400, C1402/C1411, C1420/C1430, C1424/C1440, C1442/C1453, C1459/C1472, C1466/C1482, C1484/C1495, C1501/C1514, C1508/C1524, C1526/C1538, C1544/C1557, C1551/C1567, and C1569/C1581. EGF-like domains are found at residues T1416–S1454, E1455–Q1496, E1497–E1539, and L1540–R1582. An N-linked (GlcNAc...) asparagine glycan is attached at N1471. FAS1 domains lie at R1582–L1708 and P1724–L1864. Residues N1626 and N1727 are each glycosylated (N-linked (GlcNAc...) asparagine). Residues S1966–E2031 enclose the Laminin EGF-like 2 domain. 15 cysteine pairs are disulfide-bonded: C1971-C1985, C1979-C1995, C1997-C2006, C2018-C2029, C2023-C2039, C2041-C2050, C2060-C2070, C2064-C2076, C2078-C2089, C2095-C2108, C2102-C2117, C2119-C2130, C2136-C2150, C2144-C2160, and C2162-C2173. EGF-like domains follow at residues L2056 to T2090, V2091 to R2131, and A2132 to L2174. A glycan (N-linked (GlcNAc...) asparagine) is linked at N2107. One can recognise a Link domain in the interval R2206–R2301. N2222, N2261, N2290, N2334, N2347, N2379, N2393, N2400, and N2424 each carry an N-linked (GlcNAc...) asparagine glycan. Disulfide bonds link C2230/C2299 and C2254/C2275. The FAS1 7 domain occupies N2322–L2459. Residues G2479–L2499 form a helical membrane-spanning segment. Residues R2500–K2570 lie on the Cytoplasmic side of the membrane.

As to quaternary structure, interacts with CHID1. As to expression, high levels found in spleen, lymph node, liver and placenta. Also expressed in endothelial cells.

The protein localises to the membrane. In terms of biological role, acts as a scavenger receptor for acetylated low density lipoprotein. Binds to both Gram-positive and Gram-negative bacteria and may play a role in defense against bacterial infection. When inhibited in endothelial tube formation assays, there is a marked decrease in cell-cell interactions, suggesting a role in angiogenesis. Involved in the delivery of newly synthesized CHID1/SI-CLP from the biosynthetic compartment to the endosomal/lysosomal system. The chain is Stabilin-1 (STAB1) from Homo sapiens (Human).